Reading from the N-terminus, the 468-residue chain is Glutamate--tRNA ligase (468 aa).

The 'HIGH' region motif lies at 11 to 21; the sequence is PSPTGFIHLGN. Positions 243–247 match the 'KMSKS' region motif; sequence KMSKR. ATP is bound at residue lysine 246.

It belongs to the class-I aminoacyl-tRNA synthetase family. Glutamate--tRNA ligase type 1 subfamily. Monomer.

The protein localises to the cytoplasm. The enzyme catalyses tRNA(Glu) + L-glutamate + ATP = L-glutamyl-tRNA(Glu) + AMP + diphosphate. Catalyzes the attachment of glutamate to tRNA(Glu) in a two-step reaction: glutamate is first activated by ATP to form Glu-AMP and then transferred to the acceptor end of tRNA(Glu). The sequence is that of Glutamate--tRNA ligase from Delftia acidovorans (strain DSM 14801 / SPH-1).